The primary structure comprises 934 residues: Rab GTPase-activating protein tbc-11 (934 aa).

In terms of domain architecture, PID spans V16–L134. Residues F337 to S383 form a disordered region. Residues Q351–P361 show a composition bias toward polar residues. A Rab-GAP TBC domain is found at G422 to G612. 2 coiled-coil regions span residues K727 to L800 and L861 to Q895.

Functionally, rab GTPase activating protein for the small GTPases rab-6.1 and rab-6.2. Probably acts through rab-6.1 and rab-6.2 to play a role in microRNA-mediated gene silencing in different tissue types. Required for seam cell division and alae formation. The chain is Rab GTPase-activating protein tbc-11 from Caenorhabditis elegans.